The sequence spans 450 residues: Glucose-6-phosphate isomerase (450 aa).

The active-site Proton donor is the Glu291. Residues His312 and Lys426 contribute to the active site.

This sequence belongs to the GPI family.

It is found in the cytoplasm. The catalysed reaction is alpha-D-glucose 6-phosphate = beta-D-fructose 6-phosphate. Its pathway is carbohydrate biosynthesis; gluconeogenesis. The protein operates within carbohydrate degradation; glycolysis; D-glyceraldehyde 3-phosphate and glycerone phosphate from D-glucose: step 2/4. Catalyzes the reversible isomerization of glucose-6-phosphate to fructose-6-phosphate. This is Glucose-6-phosphate isomerase from Clostridium botulinum (strain Hall / ATCC 3502 / NCTC 13319 / Type A).